A 209-amino-acid polypeptide reads, in one-letter code: CMRF35-like molecule 7 (209 aa).

A signal peptide spans 1 to 17 (MWLSPALLLLSFPGCLS). The region spanning 18–120 (IQGPALVRGP…TDRGTRVKVN (103 aa)) is the Ig-like V-type domain. Topologically, residues 18-157 (IQGPALVRGP…SSDLQKRTYY (140 aa)) are extracellular. A disulfide bridge links Cys36 with Cys104. N-linked (GlcNAc...) asparagine glycosylation occurs at Asn97. A helical transmembrane segment spans residues 158–178 (MLLVFVKVPALLILVGAVLWL). Residues 179–209 (KRSTQKVPEEQWRHTLCSDLDSELLAKDISP) are Cytoplasmic-facing. Position 196 is a phosphoserine (Ser196).

It belongs to the CD300 family. As to quaternary structure, interacts with TYROBP, which enhances cell surface expression and activation properties. May interact with HCST. Post-translationally, N-glycosylated. Expressed in myeloid cells (at protein level).

It is found in the cell membrane. In terms of biological role, acts as an activating immune receptor in mast cells through its interaction with ITAM-bearing adapter TYROBP. This is CMRF35-like molecule 7 (Cd300lb) from Mus musculus (Mouse).